Reading from the N-terminus, the 243-residue chain is Nuclear ubiquitous casein and cyclin-dependent kinase substrate 1 (243 aa).

The tract at residues 1–243 (MSRPVRNRKV…SEDEAASGED (243 aa)) is disordered. A Phosphotyrosine modification is found at Tyr-13. Phosphoserine occurs at positions 14 and 19. A Phosphotyrosine modification is found at Tyr-26. Positions 35–51 (KKIRSSPREAKNKRRSG) are enriched in basic residues. Residues Ser-54, Ser-58, Ser-61, Ser-73, Ser-75, and Ser-79 each carry the phosphoserine modification. Residues 64–77 (KDVKTKKDDSHSAE) show a composition bias toward basic and acidic residues. Positions 91–100 (QQRQAASKAA) are enriched in low complexity. The span at 111 to 124 (VGSEEEPEEDDEAP) shows a compositional bias: acidic residues. 4 positions are modified to phosphoserine: Ser-113, Ser-130, Ser-132, and Ser-144. Acidic residues predominate over residues 132–145 (SDEDFLMEDDDDSD). Residues 149–174 (SKKKNKKMVKKSKPERKEKKMPKPRL) are compositionally biased toward basic residues. Thr-179 is subject to Phosphothreonine. The residue at position 181 (Ser-181) is a Phosphoserine. A compositionally biased stretch (basic and acidic residues) spans 197–206 (TSKEKTPSPK). Position 202 is a phosphothreonine (Thr-202). A phosphoserine mark is found at Ser-204, Ser-214, Ser-223, Ser-229, Ser-234, and Ser-240. A compositionally biased stretch (acidic residues) spans 232-243 (EGSEDEAASGED).

In terms of assembly, does not interact with RAD51. Phosphorylated in an ATM-dependent manner in response to DNA damage. Phosphorylated by CDK1 and casein kinase.

It localises to the nucleus. The protein localises to the chromosome. In terms of biological role, chromatin-associated protein involved in DNA repair by promoting homologous recombination (HR). Binds double-stranded DNA (dsDNA) and secondary DNA structures, such as D-loop structures, but with less affinity than RAD51AP1. The chain is Nuclear ubiquitous casein and cyclin-dependent kinase substrate 1 from Rattus norvegicus (Rat).